A 631-amino-acid polypeptide reads, in one-letter code: ATP-dependent DNA helicase 2 subunit 1 (631 aa).

A Ku domain is found at 262-487 (FYLGPNLSMS…VEFFQKIIKK (226 aa)). The interval 550–570 (AEPHKKRAAKSTTAGASGPKM) is disordered.

The protein belongs to the ku70 family. As to quaternary structure, heterodimer of a 70 kDa and a 80 kDa subunit.

It is found in the nucleus. The protein localises to the chromosome. It carries out the reaction ATP + H2O = ADP + phosphate + H(+). Its function is as follows. Single-stranded DNA-dependent ATP-dependent helicase. Involved in non-homologous end joining (NHEJ) DNA double strand break repair. Sequence-specific DNA-binding protein that has a high affinity for a 31 bp sequence in the Yp1 gene. Site-specific DNA binding to 31 bp P element inverted repeats. This is ATP-dependent DNA helicase 2 subunit 1 (Irbp) from Drosophila melanogaster (Fruit fly).